Reading from the N-terminus, the 85-residue chain is U4-theraphotoxin-Hhn1f (85 aa).

Positions 1–22 (MKVTLIAILTCAAVLVLHTTAA) are cleaved as a signal peptide. Residues 23–48 (EELEAESQLMEVGMPDTELAAVDEER) constitute a propeptide that is removed on maturation. Cysteines 71 and 82 form a disulfide.

This sequence belongs to the neurotoxin 12 (Hwtx-2) family. 02 (Hwtx-2) subfamily. As to expression, expressed by the venom gland.

Its subcellular location is the secreted. Its function is as follows. Postsynaptic neurotoxin. In Cyriopagopus hainanus (Chinese bird spider), this protein is U4-theraphotoxin-Hhn1f.